An 815-amino-acid polypeptide reads, in one-letter code: Minichromosome loss protein 1 (815 aa).

WD repeat units follow at residues 11–50, 53–90, 93–132, 135–174, and 228–267; these read AHTD…EPDS, NHQD…EHTL, RTTL…QIFS, PAKA…LIKF, and ENHS…VVVE. The interval 306 to 362 is disordered; the sequence is LKEENDPTKPLTSSKSKNRTSKELDDLFGSDDEQSQNVNDLDGNSANEENEFINHDG. A compositionally biased stretch (polar residues) spans 340-352; sequence SQNVNDLDGNSAN. The WD 6 repeat unit spans residues 517–553; sequence ENESPVTISLSSSVVLVCTSAGYVRVFSRQGFPISIH.

In terms of assembly, interacts with pof3 and pol1.

Its subcellular location is the nucleus. It is found in the chromosome. In terms of biological role, has a role in regulating DNA replication complexes. Acts as a regulator of post DNA replication initiation. Associates with chromatin during G1 and S phases of mitosis. Required for the transcriptional repression of the outer repeats of the centromeric region. Acts as a polymerase alpha replication accessory factor and is important for S-phase DNA damage survival. Plays a role in lagging-strand synthesis and Ozaki fragment processing, in addition to DNA repair. The sequence is that of Minichromosome loss protein 1 (mcl1) from Schizosaccharomyces pombe (strain 972 / ATCC 24843) (Fission yeast).